The chain runs to 143 residues: Large ribosomal subunit protein uL15 (143 aa).

Composition is skewed to basic residues over residues Met1–Gly13 and Lys23–Gly38. Residues Met1–Gly38 are disordered.

Belongs to the universal ribosomal protein uL15 family. As to quaternary structure, part of the 50S ribosomal subunit.

Functionally, binds to the 23S rRNA. In Methanococcus maripaludis (strain C7 / ATCC BAA-1331), this protein is Large ribosomal subunit protein uL15.